The sequence spans 111 residues: Photosystem II reaction center Psb28 protein (111 aa).

This sequence belongs to the Psb28 family. In terms of assembly, part of the photosystem II complex.

Its subcellular location is the cellular thylakoid membrane. The polypeptide is Photosystem II reaction center Psb28 protein (Acaryochloris marina (strain MBIC 11017)).